The sequence spans 317 residues: Ferrochelatase (317 aa).

His191 and Glu271 together coordinate Fe cation.

Belongs to the ferrochelatase family.

The protein localises to the cytoplasm. It catalyses the reaction heme b + 2 H(+) = protoporphyrin IX + Fe(2+). It functions in the pathway porphyrin-containing compound metabolism; protoheme biosynthesis; protoheme from protoporphyrin-IX: step 1/1. In terms of biological role, catalyzes the ferrous insertion into protoporphyrin IX. This is Ferrochelatase from Thermus thermophilus (strain ATCC BAA-163 / DSM 7039 / HB27).